The following is a 300-amino-acid chain: tRNA pseudouridine synthase B (300 aa).

The active-site Nucleophile is the aspartate 38.

This sequence belongs to the pseudouridine synthase TruB family. Type 1 subfamily.

The catalysed reaction is uridine(55) in tRNA = pseudouridine(55) in tRNA. Functionally, responsible for synthesis of pseudouridine from uracil-55 in the psi GC loop of transfer RNAs. This Dehalococcoides mccartyi (strain ATCC BAA-2266 / KCTC 15142 / 195) (Dehalococcoides ethenogenes (strain 195)) protein is tRNA pseudouridine synthase B.